A 192-amino-acid polypeptide reads, in one-letter code: T-cell surface glycoprotein CD3 epsilon chain (192 aa).

The first 21 residues, methionine 1–alanine 21, serve as a signal peptide directing secretion. Residues aspartate 23–glutamate 114 lie on the Extracellular side of the membrane. Positions glutamate 26–leucine 97 constitute an Ig-like domain. Cysteines 43 and 84 form a disulfide. A glycan (N-linked (GlcNAc...) asparagine) is linked at asparagine 72. Residues valine 115–tyrosine 135 form a helical membrane-spanning segment. Residues tryptophan 136 to valine 192 are Cytoplasmic-facing. A disordered region spans residues serine 145–glutamine 180. An NUMB-binding region region spans residues glutamine 160–arginine 177. An ITAM domain is found at glycine 163 to arginine 190. A proline-rich sequence region spans residues arginine 164–proline 171. Phosphotyrosine is present on residues tyrosine 173 and tyrosine 184.

The TCR-CD3 complex is composed of a CD3D/CD3E and a CD3G/CD3E heterodimers that preferentially associate with TCRalpha and TCRbeta, respectively, to form TCRalpha/CD3E/CD3G and TCRbeta/CD3G/CD3E trimers. In turn, the hexamer interacts with CD3Z homodimer to form the TCR-CD3 complex. Alternatively, TCRalpha and TCRbeta can be replaced by TCRgamma and TCRdelta. Interacts with CD6. Interacts (via Proline-rich sequence) with NCK1; the interaction is ligand dependent but independent of tyrosine kinase activation. Post-translationally, phosphorylated on Tyr residues after T-cell receptor triggering by LCK in association with CD4/CD8.

The protein localises to the cell membrane. Its function is as follows. Part of the TCR-CD3 complex present on T-lymphocyte cell surface that plays an essential role in adaptive immune response. When antigen presenting cells (APCs) activate T-cell receptor (TCR), TCR-mediated signals are transmitted across the cell membrane by the CD3 chains CD3D, CD3E, CD3G and CD3Z. All CD3 chains contain immunoreceptor tyrosine-based activation motifs (ITAMs) in their cytoplasmic domain. Upon TCR engagement, these motifs become phosphorylated by Src family protein tyrosine kinases LCK and FYN, resulting in the activation of downstream signaling pathways. In addition of this role of signal transduction in T-cell activation, CD3E plays an essential role in correct T-cell development. Also participates in internalization and cell surface down-regulation of TCR-CD3 complexes via endocytosis sequences present in CD3E cytosolic region. In addition to its role as a TCR coreceptor, it serves as a receptor for ITPRIPL1. Ligand recognition inhibits T-cell activation by promoting interaction with NCK1, which prevents CD3E-ZAP70 interaction and blocks the ERK-NFkB signaling cascade and calcium influx. In Bos taurus (Bovine), this protein is T-cell surface glycoprotein CD3 epsilon chain (CD3E).